The following is a 255-amino-acid chain: uncharacterized protein (255 aa).

An N-terminal signal peptide occupies residues 1 to 23 (MKRLNKLVLGINLLFLVISITAG). Residue Cys-24 is the site of N-palmitoyl cysteine attachment. Cys-24 is lipidated: S-diacylglycerol cysteine.

It belongs to the staphylococcal tandem lipoprotein family.

It is found in the cell membrane. This is an uncharacterized protein from Staphylococcus aureus (strain MRSA252).